Here is a 194-residue protein sequence, read N- to C-terminus: Putative manganese efflux pump MntP (194 aa).

Transmembrane regions (helical) follow at residues 3–23 (PFSI…AAIG), 37–57 (LRAG…GWLL), 69–89 (DHWI…VAGL), 110–132 (LGLA…SLAF), 147–167 (CTFS…NLIG), and 172–192 (MLGG…HLSG).

This sequence belongs to the MntP (TC 9.B.29) family.

The protein localises to the cell inner membrane. Functionally, probably functions as a manganese efflux pump. The polypeptide is Putative manganese efflux pump MntP (Xanthomonas axonopodis pv. citri (strain 306)).